We begin with the raw amino-acid sequence, 149 residues long: uncharacterized protein (149 aa).

This is an uncharacterized protein from Saccharomyces cerevisiae (strain ATCC 204508 / S288c) (Baker's yeast).